Here is a 136-residue protein sequence, read N- to C-terminus: ATP synthase epsilon chain (136 aa).

The interval 100-120 is disordered; that stretch reads QGALEEANRGEDKPNQLKASN. The segment covering 105–114 has biased composition (basic and acidic residues); that stretch reads EANRGEDKPN.

This sequence belongs to the ATPase epsilon chain family. As to quaternary structure, F-type ATPases have 2 components, CF(1) - the catalytic core - and CF(0) - the membrane proton channel. CF(1) has five subunits: alpha(3), beta(3), gamma(1), delta(1), epsilon(1). CF(0) has three main subunits: a, b and c.

The protein resides in the cellular thylakoid membrane. Functionally, produces ATP from ADP in the presence of a proton gradient across the membrane. This is ATP synthase epsilon chain (atpC) from Synechocystis sp. (strain ATCC 27184 / PCC 6803 / Kazusa).